Here is a 634-residue protein sequence, read N- to C-terminus: 1-deoxy-D-xylulose-5-phosphate synthase (634 aa).

Residues H74 and 115–117 (AHS) each bind thiamine diphosphate. Residue D146 coordinates Mg(2+). Thiamine diphosphate-binding positions include 147–148 (GA), N176, Y283, and E365. N176 contacts Mg(2+).

Belongs to the transketolase family. DXPS subfamily. In terms of assembly, homodimer. It depends on Mg(2+) as a cofactor. The cofactor is thiamine diphosphate.

It carries out the reaction D-glyceraldehyde 3-phosphate + pyruvate + H(+) = 1-deoxy-D-xylulose 5-phosphate + CO2. Its pathway is metabolic intermediate biosynthesis; 1-deoxy-D-xylulose 5-phosphate biosynthesis; 1-deoxy-D-xylulose 5-phosphate from D-glyceraldehyde 3-phosphate and pyruvate: step 1/1. Catalyzes the acyloin condensation reaction between C atoms 2 and 3 of pyruvate and glyceraldehyde 3-phosphate to yield 1-deoxy-D-xylulose-5-phosphate (DXP). This is 1-deoxy-D-xylulose-5-phosphate synthase from Burkholderia mallei (strain ATCC 23344).